The primary structure comprises 1159 residues: ATP-dependent helicase/deoxyribonuclease subunit B (1159 aa).

In terms of domain architecture, UvrD-like helicase ATP-binding spans 1 to 401 (MSIRFVYGRS…LLKNWSYESV (401 aa)). ATP is bound at residue 8–15 (GRSGTGKS). The UvrD-like helicase C-terminal domain maps to 279–582 (PYRFKGNLEL…NIGDIARIKG (304 aa)). Cys787, Cys1106, Cys1109, and Cys1115 together coordinate [4Fe-4S] cluster.

The protein belongs to the helicase family. AddB/RexB type 1 subfamily. As to quaternary structure, heterodimer of AddA and AddB. The cofactor is Mg(2+). Requires [4Fe-4S] cluster as cofactor.

The heterodimer acts as both an ATP-dependent DNA helicase and an ATP-dependent, dual-direction single-stranded exonuclease. Recognizes the chi site generating a DNA molecule suitable for the initiation of homologous recombination. The AddB subunit has 5' -&gt; 3' nuclease activity but not helicase activity. This chain is ATP-dependent helicase/deoxyribonuclease subunit B, found in Clostridium beijerinckii (strain ATCC 51743 / NCIMB 8052) (Clostridium acetobutylicum).